The following is a 501-amino-acid chain: Lysine--tRNA ligase (501 aa).

2 residues coordinate Mg(2+): Glu412 and Glu419.

It belongs to the class-II aminoacyl-tRNA synthetase family. As to quaternary structure, homodimer. Requires Mg(2+) as cofactor.

It localises to the cytoplasm. It catalyses the reaction tRNA(Lys) + L-lysine + ATP = L-lysyl-tRNA(Lys) + AMP + diphosphate. The protein is Lysine--tRNA ligase of Chlorobium luteolum (strain DSM 273 / BCRC 81028 / 2530) (Pelodictyon luteolum).